A 490-amino-acid chain; its full sequence is Betaine aldehyde dehydrogenase (490 aa).

3 residues coordinate K(+): Thr26, Ile27, and Asp93. Position 150-152 (150-152) interacts with NAD(+); sequence GAW. Lys162 serves as the catalytic Charge relay system. Position 176–179 (176–179) interacts with NAD(+); it reads KPSE. Residue Val180 participates in K(+) binding. 230–233 contributes to the NAD(+) binding site; sequence GVAS. Leu246 contributes to the K(+) binding site. Glu252 (proton acceptor) is an active-site residue. Positions 254, 286, and 387 each coordinate NAD(+). The active-site Nucleophile is the Cys286. Cys286 is subject to Cysteine sulfenic acid (-SOH). K(+) contacts are provided by Lys457 and Gly460. Catalysis depends on Glu464, which acts as the Charge relay system.

The protein belongs to the aldehyde dehydrogenase family. As to quaternary structure, dimer of dimers. Requires K(+) as cofactor.

The catalysed reaction is betaine aldehyde + NAD(+) + H2O = glycine betaine + NADH + 2 H(+). It functions in the pathway amine and polyamine biosynthesis; betaine biosynthesis via choline pathway; betaine from betaine aldehyde: step 1/1. Its function is as follows. Involved in the biosynthesis of the osmoprotectant glycine betaine. Catalyzes the irreversible oxidation of betaine aldehyde to the corresponding acid. In Escherichia coli O139:H28 (strain E24377A / ETEC), this protein is Betaine aldehyde dehydrogenase.